Here is a 359-residue protein sequence, read N- to C-terminus: Spore germination protein GerQC (359 aa).

The N-terminal stretch at 1 to 16 is a signal peptide; sequence MKRWILFLILSVFLIG. Cys17 carries N-palmitoyl cysteine lipidation. Cys17 carries S-diacylglycerol cysteine lipidation.

This sequence belongs to the GerABKC lipoprotein family.

The protein resides in the membrane. Functionally, required for the germination response to inosine. Has no role in L-alanine germination. This chain is Spore germination protein GerQC (gerQC), found in Bacillus cereus.